Reading from the N-terminus, the 445-residue chain is MVRMEDIISLAKRKGFVFQSSEVYGGLSGAWDYGPLGVELKKNIKKEWWKSMVYLHENIVGLDSAIFMRPEIWRASGHVDGFSDSMVDCKDCKSRFRADFIDLSKNCPNCKVGNNFTSPRSFNLMFKTHIGVVEDSSSEVYLRPETAQGIFVNFRNVLDSSRLKIPFGIAQVGKAFRNEIVTKNFIFRTCEFEQMEMQFFVHPKQIDEWFCYWQQNRMNFFIETLKISPDRLRFKAHDSTQLAHYAKAAFDIEYEFPFGFQEVEGIHNRGNYDLTQHAKFSNKPKVFEYHDLLTKEKYVPYVIETSAGLTRSVLMTLCDAYSEEELSDGDKRIVLRLHPKLAPYKIAIFPLVKKVELTEIARRIYMELCDDFHIFYDDSGTIGKRYRRQDEIGTPYCVTIDYNTIEDETVTVRERNNMTQKRIFINDLYSYIKTEILNYKEDFNK.

2 residues coordinate substrate: Arg-97 and Glu-145. ATP contacts are provided by residues 177–179, 187–192, 262–263, and 308–311; these read RNE, FRTCEF, EV, and GLTR. Residue 192-196 participates in substrate binding; sequence FEQME. 304-308 provides a ligand contact to substrate; sequence ETSAG.

This sequence belongs to the class-II aminoacyl-tRNA synthetase family. As to quaternary structure, homodimer.

The protein resides in the cytoplasm. The catalysed reaction is tRNA(Gly) + glycine + ATP = glycyl-tRNA(Gly) + AMP + diphosphate. In terms of biological role, catalyzes the attachment of glycine to tRNA(Gly). This is Glycine--tRNA ligase from Borreliella burgdorferi (strain ZS7) (Borrelia burgdorferi).